Here is a 650-residue protein sequence, read N- to C-terminus: Acetyl-coenzyme A synthetase (650 aa).

Residues 191 to 194 (RGGR), Thr-311, and Asn-335 contribute to the CoA site. Residues 387–389 (GEP), 411–416 (DTWWQT), Asp-500, and Arg-515 each bind ATP. Ser-523 is a CoA binding site. Arg-526 serves as a coordination point for ATP. 3 residues coordinate Mg(2+): Val-537, His-539, and Val-542. CoA is bound at residue Arg-584. Lys-609 bears the N6-acetyllysine mark.

This sequence belongs to the ATP-dependent AMP-binding enzyme family. Mg(2+) is required as a cofactor. Acetylated. Deacetylation by the SIR2-homolog deacetylase activates the enzyme.

The catalysed reaction is acetate + ATP + CoA = acetyl-CoA + AMP + diphosphate. Functionally, catalyzes the conversion of acetate into acetyl-CoA (AcCoA), an essential intermediate at the junction of anabolic and catabolic pathways. AcsA undergoes a two-step reaction. In the first half reaction, AcsA combines acetate with ATP to form acetyl-adenylate (AcAMP) intermediate. In the second half reaction, it can then transfer the acetyl group from AcAMP to the sulfhydryl group of CoA, forming the product AcCoA. The chain is Acetyl-coenzyme A synthetase from Shewanella oneidensis (strain ATCC 700550 / JCM 31522 / CIP 106686 / LMG 19005 / NCIMB 14063 / MR-1).